Here is a 369-residue protein sequence, read N- to C-terminus: Phenylalanine--tRNA ligase alpha subunit (369 aa).

Glu269 serves as a coordination point for Mg(2+).

This sequence belongs to the class-II aminoacyl-tRNA synthetase family. Phe-tRNA synthetase alpha subunit type 1 subfamily. As to quaternary structure, tetramer of two alpha and two beta subunits. It depends on Mg(2+) as a cofactor.

It is found in the cytoplasm. The enzyme catalyses tRNA(Phe) + L-phenylalanine + ATP = L-phenylalanyl-tRNA(Phe) + AMP + diphosphate + H(+). This Brucella abortus (strain 2308) protein is Phenylalanine--tRNA ligase alpha subunit.